The chain runs to 337 residues: tRNA N6-adenosine threonylcarbamoyltransferase (337 aa).

Residues His-111 and His-115 each contribute to the Fe cation site. Substrate is bound by residues 134–138, Asp-167, Gly-180, and Asn-272; that span reads LVSGG. A Fe cation-binding site is contributed by Asp-300.

This sequence belongs to the KAE1 / TsaD family. Fe(2+) serves as cofactor.

It localises to the cytoplasm. The enzyme catalyses L-threonylcarbamoyladenylate + adenosine(37) in tRNA = N(6)-L-threonylcarbamoyladenosine(37) in tRNA + AMP + H(+). Its function is as follows. Required for the formation of a threonylcarbamoyl group on adenosine at position 37 (t(6)A37) in tRNAs that read codons beginning with adenine. Is involved in the transfer of the threonylcarbamoyl moiety of threonylcarbamoyl-AMP (TC-AMP) to the N6 group of A37, together with TsaE and TsaB. TsaD likely plays a direct catalytic role in this reaction. This Salmonella typhi protein is tRNA N6-adenosine threonylcarbamoyltransferase.